Reading from the N-terminus, the 175-residue chain is Centrosomal protein 20 (175 aa).

A necessary and sufficient for homooligomerization and localization to centrosomes and pericentriolar satellites region spans residues 1–104 (MATIAELKAV…IVEDANGKSV (104 aa)). A LisH domain is found at 49–81 (ENLLINELIREYLEFNKYKYSASVLTAEAGQPE). Residues 137–166 (RQNLAKPSTERNQKDRIPEPGRMAGTSIEE) are disordered. Basic and acidic residues predominate over residues 144–155 (STERNQKDRIPE).

It belongs to the CEP43 family. Homooligomer; probably required for localization to centrosomes.

Its subcellular location is the cell projection. It is found in the cilium. The protein localises to the cytoplasm. It localises to the cytoskeleton. The protein resides in the cilium basal body. Its subcellular location is the microtubule organizing center. It is found in the centrosome. The protein localises to the cytoplasmic granule. It localises to the centriolar satellite. Involved in the biogenesis of cilia. Required for the recruitment of PLK1 to centrosomes and S phase progression. This chain is Centrosomal protein 20 (CEP20), found in Gallus gallus (Chicken).